Reading from the N-terminus, the 402-residue chain is Subtilisin-like protease 9 (402 aa).

Residues 1 to 20 form the signal peptide; sequence MGFFRQLFSLSLCALSLAIP. Positions 21-120 are excised as a propeptide; it reads SKLIGLENTQ…VEVDRVVKLD (100 aa). The region spanning 36-119 is the Inhibitor I9 domain; sequence SYIVVMKSTI…YVEVDRVVKL (84 aa). A Peptidase S8 domain is found at 130–402; it reads SWGLGRISHK…RKLLYNGSGA (273 aa). Active-site charge relay system residues include Asp-162 and His-193. Asn-254 carries N-linked (GlcNAc...) asparagine glycosylation. The active-site Charge relay system is Ser-348. N-linked (GlcNAc...) asparagine glycosylation is found at Asn-390 and Asn-398.

Belongs to the peptidase S8 family.

The protein localises to the secreted. Secreted subtilisin-like serine protease with keratinolytic activity that contributes to pathogenicity. This Arthroderma benhamiae (strain ATCC MYA-4681 / CBS 112371) (Trichophyton mentagrophytes) protein is Subtilisin-like protease 9 (SUB9).